Here is a 425-residue protein sequence, read N- to C-terminus: E3 ubiquitin-protein ligase GW2 (425 aa).

The RING-type; degenerate zinc-finger motif lies at 62–105 (CPICFLYYPSLNRSKCCSKGICTECFLQMKPTHTAQPTQCPFCK).

In terms of tissue distribution, expressed in roots, shoots, leaves, inflorescence meristems, stamens, pistils, spikelet hulls and endosperms 4 days after fertilization.

The protein resides in the cytoplasm. It carries out the reaction S-ubiquitinyl-[E2 ubiquitin-conjugating enzyme]-L-cysteine + [acceptor protein]-L-lysine = [E2 ubiquitin-conjugating enzyme]-L-cysteine + N(6)-ubiquitinyl-[acceptor protein]-L-lysine.. It functions in the pathway protein modification; protein ubiquitination. Functionally, E3 ubiquitin-protein ligase involved in the regulation of grain size. May limit grain width and weight by restricting cell proliferation of the spikelet hull. Possesses E3 ubiquitin-protein ligase activity in vitro. The chain is E3 ubiquitin-protein ligase GW2 from Oryza sativa subsp. indica (Rice).